The following is a 67-amino-acid chain: Large ribosomal subunit protein uL29 (67 aa).

Belongs to the universal ribosomal protein uL29 family. As to quaternary structure, part of the 50S ribosomal subunit. Contacts protein L23 and trigger factor when it is complexed with the ribosome.

Its function is as follows. Binds the 23S rRNA. One of the proteins that surrounds the polypeptide exit tunnel on the outside of the subunit. The protein is Large ribosomal subunit protein uL29 (rpmC) of Deinococcus radiodurans (strain ATCC 13939 / DSM 20539 / JCM 16871 / CCUG 27074 / LMG 4051 / NBRC 15346 / NCIMB 9279 / VKM B-1422 / R1).